We begin with the raw amino-acid sequence, 91 residues long: Alpha-defensin 31 (91 aa).

Positions 1 to 19 are cleaved as a signal peptide; that stretch reads MKKLVLLFALVLLAFQVQA. A propeptide spanning residues 20-65 is cleaved from the precursor; the sequence is DSIQNTDEETKTEEQQGEEDQAVSVSFGDPQGSGLQDAALGWGRRC. The tract at residues 22–55 is disordered; the sequence is IQNTDEETKTEEQQGEEDQAVSVSFGDPQGSGLQ. 6 consecutive repeat copies span residues 65-67, 68-70, 71-73, 77-79, 80-82, and 83-85. Residues 65 to 85 are 6 X 3 AA tandem repeats of C-P-X; it reads CPRCPPCPRCSWCPRCPTCPR.

It belongs to the alpha-defensin family. Paneth cells of the small bowel.

It is found in the secreted. Its function is as follows. Apparent precursor of a secreted, cationic, proline- and cysteine-rich peptide that contains Cys-Pro-Xaa repeats. Unlike cryptdin, the proposed mature peptide region lacks the structural motif characteristic of defensins. It may have microbicidal activities. In Mus musculus (Mouse), this protein is Alpha-defensin 31.